Here is a 224-residue protein sequence, read N- to C-terminus: Ribonuclease 3 (224 aa).

The region spanning 5–127 (LERLCRRLNY…ILAAIYLDGG (123 aa)) is the RNase III domain. Glutamate 40 is a Mg(2+) binding site. Aspartate 44 is a catalytic residue. Mg(2+) is bound by residues aspartate 113 and glutamate 116. The active site involves glutamate 116. Residues 154 to 224 (DAKTQLQEFL…AKAMLEQLQG (71 aa)) enclose the DRBM domain.

Belongs to the ribonuclease III family. In terms of assembly, homodimer. Requires Mg(2+) as cofactor.

Its subcellular location is the cytoplasm. It carries out the reaction Endonucleolytic cleavage to 5'-phosphomonoester.. Its function is as follows. Digests double-stranded RNA. Involved in the processing of primary rRNA transcript to yield the immediate precursors to the large and small rRNAs (23S and 16S). Processes some mRNAs, and tRNAs when they are encoded in the rRNA operon. Processes pre-crRNA and tracrRNA of type II CRISPR loci if present in the organism. This Legionella pneumophila subsp. pneumophila (strain Philadelphia 1 / ATCC 33152 / DSM 7513) protein is Ribonuclease 3.